Here is a 176-residue protein sequence, read N- to C-terminus: Protein MOTHER of FT and TFL1 homolog 1 (176 aa).

The protein belongs to the phosphatidylethanolamine-binding protein family.

In terms of biological role, may form complexes with phosphorylated ligands by interfering with kinases and their effectors. In Oryza sativa subsp. japonica (Rice), this protein is Protein MOTHER of FT and TFL1 homolog 1.